An 826-amino-acid polypeptide reads, in one-letter code: Ribonucleoside-diphosphate reductase large subunit (826 aa).

Residues threonine 171, 186-187 (SC), glycine 217, 387-391 (NLCAE), and 594-598 (PTSGC) contribute to the substrate site. The cysteines at positions 187 and 403 are disulfide-linked. Asparagine 387 acts as the Proton acceptor in catalysis. Residue cysteine 389 is the Cysteine radical intermediate of the active site. Residue glutamate 391 is the Proton acceptor of the active site. Residues 747 to 769 (SVPREEQNERSPAEQMPPRPMEP) form a disordered region. The span at 749–758 (PREEQNERSP) shows a compositional bias: basic and acidic residues.

Belongs to the ribonucleoside diphosphate reductase large chain family. In terms of assembly, heterotetramer composed of a homodimer of the large subunit (R1) and a homodimer of the small subunit (R2). Larger multisubunit protein complex are also active, composed of (R1)n(R2)n.

The catalysed reaction is a 2'-deoxyribonucleoside 5'-diphosphate + [thioredoxin]-disulfide + H2O = a ribonucleoside 5'-diphosphate + [thioredoxin]-dithiol. Its function is as follows. Ribonucleoside-diphosphate reductase holoenzyme provides the precursors necessary for viral DNA synthesis. Allows virus growth in non-dividing cells, as well as reactivation from latency in infected hosts. Catalyzes the biosynthesis of deoxyribonucleotides from the corresponding ribonucleotides. This is Ribonucleoside-diphosphate reductase large subunit from Homo sapiens (Human).